Reading from the N-terminus, the 286-residue chain is Pantothenate synthetase (286 aa).

30-37 (MGNLHEGH) serves as a coordination point for ATP. Catalysis depends on His37, which acts as the Proton donor. A (R)-pantoate-binding site is contributed by Gln61. Gln61 serves as a coordination point for beta-alanine. 149-152 (GRKD) lines the ATP pocket. Position 155 (Gln155) interacts with (R)-pantoate. ATP-binding positions include Val178 and 186–189 (MSSR).

This sequence belongs to the pantothenate synthetase family. As to quaternary structure, homodimer.

The protein localises to the cytoplasm. It catalyses the reaction (R)-pantoate + beta-alanine + ATP = (R)-pantothenate + AMP + diphosphate + H(+). The protein operates within cofactor biosynthesis; (R)-pantothenate biosynthesis; (R)-pantothenate from (R)-pantoate and beta-alanine: step 1/1. In terms of biological role, catalyzes the condensation of pantoate with beta-alanine in an ATP-dependent reaction via a pantoyl-adenylate intermediate. The protein is Pantothenate synthetase of Alkalilimnicola ehrlichii (strain ATCC BAA-1101 / DSM 17681 / MLHE-1).